We begin with the raw amino-acid sequence, 328 residues long: Protein chibby homolog 2 (328 aa).

The tract at residues 180-231 (NKGASSVQKDTENTTAAGEGSLGPTCQEEHDAKEESTTPTQNDTKIAPSTED) is disordered. Residues 182–195 (GASSVQKDTENTTA) show a composition bias toward polar residues. The segment covering 206–215 (QEEHDAKEES) has biased composition (basic and acidic residues). The stretch at 259-307 (RESLHALQDESKFFQEEYKKLKLQLNNVKNTVSDITTQMEMLEKELIAI) forms a coiled coil.

This sequence belongs to the chibby family. SPERT subfamily.

In Gallus gallus (Chicken), this protein is Protein chibby homolog 2 (CBY2).